A 1006-amino-acid chain; its full sequence is Unconventional myosin-Id (1006 aa).

A2 carries the post-translational modification N-acetylalanine. One can recognise a Myosin motor domain in the interval 9–695 (FGKADFVLMD…TLFTLEELRA (687 aa)). 102–109 (GESGAGKT) lines the ATP pocket. S200 is modified (phosphoserine). Y536 carries the phosphotyrosine modification. The interval 572-594 (MIALVDNLASKEPYYVRCIKPND) is actin-binding. IQ domains follow at residues 699 to 719 (VRIV…MRYK) and 721 to 741 (TKAA…SYIH). One can recognise a TH1 domain in the interval 812 to 1005 (GQRADLGLQR…RSGFILSVPG (194 aa)).

It belongs to the TRAFAC class myosin-kinesin ATPase superfamily. Myosin family. In terms of assembly, interacts (via the two IQ motifs) with calmodulin. Binds an additional calmodulin chain via a third, C-terminal region. Interacts with F-actin.

It is found in the cytoplasm. The protein resides in the perikaryon. Its subcellular location is the cell projection. The protein localises to the dendrite. It localises to the early endosome. It is found in the cell cortex. Its function is as follows. Unconventional myosin that functions as actin-based motor protein with ATPase activity. Plays a role in endosomal protein trafficking, and especially in the transfer of cargo proteins from early to recycling endosomes. Required for normal planar cell polarity in ciliated tracheal cells, for normal rotational polarity of cilia, and for coordinated, unidirectional ciliary movement in the trachea. Required for normal, polarized cilia organization in brain ependymal epithelial cells. In Bos taurus (Bovine), this protein is Unconventional myosin-Id (MYO1D).